The chain runs to 953 residues: Mannosylglycoprotein endo-beta-mannosidase (953 aa).

Residue E461 is the Proton donor of the active site. E553 (nucleophile) is an active-site residue.

The protein belongs to the glycosyl hydrolase 2 family. Heterotrimer of 31 kDa, 28 kDa and 42 kDa subunits. The mature enzyme is proteotically cleaved into 3 subunits of 31 kDa, 28 kDa and 42 kDa. In terms of tissue distribution, ubiquitously expressed.

It carries out the reaction Hydrolysis of the alpha-D-mannosyl-(1-&gt;6)-beta-D-mannosyl-(1-&gt;4)-N-acetyl-beta-D-glucosaminyl-(1-&gt;4)-N-acetyl-beta-D-glucosaminyl sequence of glycoprotein to alpha-D-mannosyl-(1-&gt;6)-D-mannose and N-acetyl-beta-D-glucosaminyl-(1-&gt;4)-N-acetyl-beta-D-glucosaminyl sequences.. In terms of biological role, glycosidase that specifically hydrolyzes the Man-beta-1,4-GlcNAc linkage in the trimannosyl core structure of N-glycans. Does not hydrolyzes pyridylamino derivatives sugar chains containing Man-alpha-1,3-Man-beta or Xylose-beta-1,2-Man-beta. The protein is Mannosylglycoprotein endo-beta-mannosidase (EBM) of Lilium longiflorum (Trumpet lily).